Here is a 300-residue protein sequence, read N- to C-terminus: Fatty acid elongase 3 (300 aa).

The next 3 helical transmembrane spans lie at 31–51 (VPAV…ENVM), 61–81 (FLNM…AYYC), and 127–147 (IFFD…KIPE). The HxxHH motif signature appears at 165–169 (HWYHH). The Nucleophile role is filled by histidine 168. The next 4 helical transmembrane spans lie at 170–190 (ATVM…GLWF), 192–212 (TMNY…ACGM), 219–239 (IAPL…LIVL), and 261–283 (MGLL…SYIS).

It belongs to the ELO family.

Its subcellular location is the endoplasmic reticulum membrane. It carries out the reaction an acyl-CoA + malonyl-CoA + H(+) = a 3-oxoacyl-CoA + CO2 + CoA. It participates in lipid metabolism; fatty acid biosynthesis. Its function is as follows. Involved in the synthesis of fatty acids. Elongates C14 fatty acids to C18. Required for the maintenance of the global lipidome profile in this parasite. This Trypanosoma cruzi (strain CL Brener) protein is Fatty acid elongase 3.